Reading from the N-terminus, the 20-residue chain is Hemoglobinase-like protein 1 (20 aa).

This sequence belongs to the peptidase C13 family.

It carries out the reaction Hydrolysis of proteins and small molecule substrates at -Asn-|-Xaa- bonds.. In Fasciola hepatica (Liver fluke), this protein is Hemoglobinase-like protein 1.